The following is a 390-amino-acid chain: 3,5-dihydroxyphenylacetyl-CoA synthase (390 aa).

The active site involves Cys173.

The protein belongs to the thiolase-like superfamily. Chalcone/stilbene synthases family.

The enzyme catalyses 4 malonyl-CoA + 4 H(+) = (3,5-dihydroxyphenyl)acetyl-CoA + 4 CO2 + 3 CoA + H2O. It participates in antibiotic biosynthesis; vancomycin biosynthesis. In terms of biological role, involved in the biosynthesis of the nonproteinogenic amino acid monomer (S)-3,5-dihydroxyphenylglycine (Dpg) responsible of the production of vancomycin and teicoplanin antibiotics. Catalyzes the Claisen condensation of four molecules of malonyl-CoA to yield 3,5-dihydroxyphenylacetyl-CoA (DPA-CoA) and three free coenzyme A (CoA). DpgA requires the presence of the dehydratases DpgB and DpgD to facilitate the aromatization of the DPA-S-DgpA or DPA-S-CoA intermediate. In Streptomyces toyocaensis, this protein is 3,5-dihydroxyphenylacetyl-CoA synthase.